Consider the following 367-residue polypeptide: DNA replication and repair protein RecF (367 aa).

31–38 (GENGSGKT) serves as a coordination point for ATP.

Belongs to the RecF family.

The protein localises to the cytoplasm. Its function is as follows. The RecF protein is involved in DNA metabolism; it is required for DNA replication and normal SOS inducibility. RecF binds preferentially to single-stranded, linear DNA. It also seems to bind ATP. This is DNA replication and repair protein RecF from Saccharophagus degradans (strain 2-40 / ATCC 43961 / DSM 17024).